Consider the following 271-residue polypeptide: Glutamate racemase (271 aa).

Substrate-binding positions include 12 to 13 and 44 to 45; these read DS and YG. The Proton donor/acceptor role is filled by C75. Substrate is bound at residue 76–77; sequence NS. The Proton donor/acceptor role is filled by C185. A substrate-binding site is contributed by 186 to 187; sequence TH.

Belongs to the aspartate/glutamate racemases family.

The catalysed reaction is L-glutamate = D-glutamate. Its pathway is cell wall biogenesis; peptidoglycan biosynthesis. In terms of biological role, provides the (R)-glutamate required for cell wall biosynthesis. In Mycobacterium bovis (strain ATCC BAA-935 / AF2122/97), this protein is Glutamate racemase.